A 60-amino-acid polypeptide reads, in one-letter code: UPF0434 protein Bpro_2950 (60 aa).

The protein belongs to the UPF0434 family.

The polypeptide is UPF0434 protein Bpro_2950 (Polaromonas sp. (strain JS666 / ATCC BAA-500)).